Reading from the N-terminus, the 1322-residue chain is Serine/threonine-protein kinase TIO (1322 aa).

Positions 6 to 256 (YHVIELVGEG…WPALREHPFV (251 aa)) constitute a Protein kinase domain. Residues 12-20 (VGEGSFGRV) and lysine 35 contribute to the ATP site. The Proton acceptor role is filled by aspartate 127. Positions 1000–1322 (CMEDRDLLKA…VIVAKVSGES (323 aa)) are required for the binding to Kinesin-12 members. ARM repeat units lie at residues 1056–1098 (PRLA…DLSR), 1101–1140 (KAFYKYIGEASVLQPLKEYLTHVDPNIRAKACSALGNMCR), 1143–1182 (GYFYSALAEHQIIGLLIDRCADPDKRTQKFACFAIGNAAY), 1183–1223 (HNDT…NLVR), 1226–1273 (NKLC…LFSL), and 1281–1320 (QICRQFVKSSELFPVIARLKQSPEANIAHYASVIVAKVSG).

It belongs to the protein kinase superfamily. Ser/Thr protein kinase family. Interacts with Kinesin-12 members KIN12A/PAKRP1 and KIN12B/PAKRP1L. Interacts with KIN7B/NACK2. Ubiquitous.

It is found in the cytoplasm. Its subcellular location is the cytoskeleton. The protein localises to the phragmoplast. It carries out the reaction L-seryl-[protein] + ATP = O-phospho-L-seryl-[protein] + ADP + H(+). It catalyses the reaction L-threonyl-[protein] + ATP = O-phospho-L-threonyl-[protein] + ADP + H(+). In terms of biological role, plays a role in conventional modes of cytokinesis in meristems and during male gametogenesis but also acts in nonconventional modes of cytokinesis (cellularization) during female gametogenesis. Constitutes a signaling module in association with Kinesin-12 members that is required to support phragmoplast expansion and cell-plate growth in plant cells. The protein is Serine/threonine-protein kinase TIO (TIO) of Arabidopsis thaliana (Mouse-ear cress).